The following is a 565-amino-acid chain: Urocanate hydratase (565 aa).

NAD(+)-binding positions include 58–59 (GG), glutamine 136, 182–184 (GMG), glutamate 202, arginine 207, 245–246 (NA), 266–270 (QTSAH), 276–277 (YL), and tyrosine 325. Residue cysteine 413 is part of the active site. Glycine 495 is a binding site for NAD(+).

This sequence belongs to the urocanase family. The cofactor is NAD(+).

It is found in the cytoplasm. The enzyme catalyses 4-imidazolone-5-propanoate = trans-urocanate + H2O. The protein operates within amino-acid degradation; L-histidine degradation into L-glutamate; N-formimidoyl-L-glutamate from L-histidine: step 2/3. Catalyzes the conversion of urocanate to 4-imidazolone-5-propionate. This is Urocanate hydratase from Vibrio cholerae serotype O1 (strain ATCC 39541 / Classical Ogawa 395 / O395).